Consider the following 558-residue polypeptide: Potassium-transporting ATPase potassium-binding subunit (558 aa).

The next 12 membrane-spanning stretches (helical) occupy residues Met-1 to Leu-21, Phe-66 to Leu-86, Met-127 to Ala-147, Ile-166 to Met-186, Ile-245 to Leu-265, Ala-281 to Trp-301, Phe-327 to Val-347, Leu-354 to Gly-374, Val-377 to Val-397, Ile-416 to Met-436, Ile-482 to Ile-502, and Ile-531 to Ile-551.

It belongs to the KdpA family. In terms of assembly, the system is composed of three essential subunits: KdpA, KdpB and KdpC.

The protein localises to the cell membrane. Part of the high-affinity ATP-driven potassium transport (or Kdp) system, which catalyzes the hydrolysis of ATP coupled with the electrogenic transport of potassium into the cytoplasm. This subunit binds the extracellular potassium ions and delivers the ions to the membrane domain of KdpB through an intramembrane tunnel. The sequence is that of Potassium-transporting ATPase potassium-binding subunit from Staphylococcus aureus (strain MSSA476).